A 647-amino-acid polypeptide reads, in one-letter code: DNA mismatch repair protein MutL (647 aa).

A disordered region spans residues 393-423 (VSLVANKQQPTVKQAKRSADDSDSEHGKLDY). A compositionally biased stretch (basic and acidic residues) spans 409 to 423 (RSADDSDSEHGKLDY).

This sequence belongs to the DNA mismatch repair MutL/HexB family.

This protein is involved in the repair of mismatches in DNA. It is required for dam-dependent methyl-directed DNA mismatch repair. May act as a 'molecular matchmaker', a protein that promotes the formation of a stable complex between two or more DNA-binding proteins in an ATP-dependent manner without itself being part of a final effector complex. The polypeptide is DNA mismatch repair protein MutL (Streptococcus thermophilus (strain CNRZ 1066)).